The sequence spans 334 residues: uncharacterized protein (334 aa).

Tyr52 acts as the Proton donor in catalysis. Positions 314-334 (LPPPASPNSEPQVTGGCSSMC) are disordered. The span at 320–334 (PNSEPQVTGGCSSMC) shows a compositional bias: polar residues.

Belongs to the aldo/keto reductase family.

The protein resides in the cytoplasm. It localises to the nucleus. This is an uncharacterized protein from Schizosaccharomyces pombe (strain 972 / ATCC 24843) (Fission yeast).